The chain runs to 356 residues: GDP-mannose:di-myo-inositol-1,3'-phosphate beta-1,2-mannosyltransferase (356 aa).

It belongs to the MDIP synthase family. Mg(2+) serves as cofactor.

The catalysed reaction is bis(myo-inositol) 1,3'-phosphate + GDP-alpha-D-mannose = 2-O-(beta-D-mannosyl)-bis(myo-inositol) 1,3'-phosphate + GDP + H(+). It carries out the reaction 2-O-(beta-D-mannosyl)-bis(myo-inositol) 1,3'-phosphate + GDP-alpha-D-mannose = 2-O-(beta-D-mannosyl-(1-&gt;2)-beta-D-mannosyl)-bis(myo-inositol) 1,3'-phosphate + GDP + H(+). It catalyses the reaction bis(myo-inositol) 1,3'-phosphate + 2 GDP-alpha-D-mannose = 2-O-(beta-D-mannosyl-(1-&gt;2)-beta-D-mannosyl)-bis(myo-inositol) 1,3'-phosphate + 2 GDP + 2 H(+). Catalyzes the transfer of the mannosyl group from GDP-mannose to di-myo-inositol-1,3'-phosphate (DIP), producing mannosyl-di-myo-inositol phosphate (MDIP). Can also use MDIP as an acceptor of a second mannose residue, yielding di-mannosyl-di-myo-inositol phosphate (MMDIP). This is GDP-mannose:di-myo-inositol-1,3'-phosphate beta-1,2-mannosyltransferase from Aquifex aeolicus (strain VF5).